Consider the following 460-residue polypeptide: Cysteine--tRNA ligase (460 aa).

Residue cysteine 29 participates in Zn(2+) binding. The 'HIGH' region signature appears at methionine 31–histidine 41. Residues cysteine 213, histidine 238, and glutamate 242 each contribute to the Zn(2+) site. Positions lysine 270 to serine 274 match the 'KMSKS' region motif. Residue lysine 273 coordinates ATP.

It belongs to the class-I aminoacyl-tRNA synthetase family. Monomer. Zn(2+) is required as a cofactor.

The protein resides in the cytoplasm. The enzyme catalyses tRNA(Cys) + L-cysteine + ATP = L-cysteinyl-tRNA(Cys) + AMP + diphosphate. This is Cysteine--tRNA ligase from Verminephrobacter eiseniae (strain EF01-2).